Reading from the N-terminus, the 497-residue chain is Delayed-rectifier potassium channel regulatory subunit KCNS1 (497 aa).

Residues 1 to 186 are Cytoplasmic-facing; the sequence is MVSEFPGPGS…LTMENPGYSL (186 aa). The chain crosses the membrane as a helical span at residues 187-208; that stretch reads PSKLFSCVSIGVVLASIAAMCI. Over 209 to 239 the chain is Extracellular; that stretch reads HSLPEYQAREAAAAVAAVAAGRSAEEVRDDP. The helical transmembrane segment at 240–262 threads the bilayer; sequence VLRRLEYFCIAWFSFEVSSRLLL. At 263 to 273 the chain is on the cytoplasmic side; that stretch reads APSTRNFFCHP. The chain crosses the membrane as a helical span at residues 274 to 291; it reads LNLIDIVSVLPFYLTLLA. The Extracellular segment spans residues 292 to 309; that stretch reads GAALGDQRGASGEELGDL. The chain crosses the membrane as a helical; Voltage-sensor span at residues 310 to 330; sequence GKVVQVFRLMRIFRVLKLARH. Residues 331–345 lie on the Cytoplasmic side of the membrane; sequence STGLRSLGATLKHSY. The helical transmembrane segment at 346–367 threads the bilayer; that stretch reads REVGILLLYLAVGVSVFSGVAY. Residues 368–379 lie on the Extracellular side of the membrane; it reads TAEEENEGFHTI. An intramembrane region (helical) is located at residues 380-391; the sequence is PACWWWGTVSMT. Residues 392–397 carry the Selectivity filter motif; that stretch reads TVGYGD. Residues 392-399 lie within the membrane without spanning it; sequence TVGYGDVV. The Extracellular segment spans residues 400 to 406; sequence PETVGGK. A helical membrane pass occupies residues 407–435; sequence LAASGCILGGILVVALPITIIFNKFSHFY. At 436–497 the chain is on the cytoplasmic side; it reads RRQKALEAAV…PREPAKSHSY (62 aa). The disordered stretch occupies residues 464–497; it reads SDVSLETSRDTSQEGRSTDLETQAPREPAKSHSY. A compositionally biased stretch (basic and acidic residues) spans 470-482; the sequence is TSRDTSQEGRSTD.

This sequence belongs to the potassium channel family. S (TC 1.A.1.2) subfamily. Kv9.1/KCNS1 sub-subfamily. Heterotetramer with KCNB1 and KCNB2. Does not form homomultimers. As to expression, detected in brain, but not in the other tissues tested. The highest levels of expression are in olfactory bulb, cerebral cortex, hippocampus, habenula, basolateral amygdaloid nuclei and cerebellum.

The protein localises to the cell membrane. Potassium channel regulatory subunit that modulate the delayed rectifier voltage-gated potassium channel activity of KCNB1 and KCNB2 by altering their kinetics, expression levels, and shifting the half-inactivation potential to more polarized values. While it does not form functional channels on its own, it can form functional heterotetrameric channels with KCNB1 and KCNB2. Each regulatory subunit has unique regulatory properties that can lead to extensive inhibition, significant changes in kinetics, and/or substantial shifts in the voltage dependencies of the inactivation process. The polypeptide is Delayed-rectifier potassium channel regulatory subunit KCNS1 (Mus musculus (Mouse)).